Here is a 262-residue protein sequence, read N- to C-terminus: Biotin carboxyl carrier protein of acetyl-CoA carboxylase, chloroplastic (262 aa).

A chloroplast-targeting transit peptide spans 1–47; sequence MASSLAPATKAATNLRLTHSLRFSPKPNNLRFATKPGNTLLCTRVKA. Disordered stretches follow at residues 53–84 and 125–185; these read ALDS…PSSS and IRKK…KSSL. Over residues 132–160 the composition is skewed to pro residues; that stretch reads PQPPPAPQPSVVYSPPPPALPPPPVPAST. Residues 161-185 show a composition bias toward low complexity; sequence PAPTLARATPTPTSAPAVKSAKSSL. Positions 185–261 constitute a Biotinyl-binding domain; that stretch reads LPPLKSPMAG…SVDTPLFVIQ (77 aa). Lys-227 carries the N6-biotinyllysine modification.

The protein resides in the plastid. It is found in the chloroplast. The protein operates within lipid metabolism; fatty acid biosynthesis. Its function is as follows. This protein is a component of the acetyl coenzyme A carboxylase complex; first, biotin carboxylase catalyzes the carboxylation of the carrier protein and then the transcarboxylase transfers the carboxyl group to form malonyl-CoA. In Glycine max (Soybean), this protein is Biotin carboxyl carrier protein of acetyl-CoA carboxylase, chloroplastic (ACCB-1).